Here is a 362-residue protein sequence, read N- to C-terminus: Chorismate synthase (362 aa).

An NADP(+)-binding site is contributed by Arg47. FMN is bound by residues 124-126 (RSS), Gly286, 301-305 (KPTAT), and Arg327.

The protein belongs to the chorismate synthase family. In terms of assembly, homotetramer. Requires FMNH2 as cofactor.

The enzyme catalyses 5-O-(1-carboxyvinyl)-3-phosphoshikimate = chorismate + phosphate. It participates in metabolic intermediate biosynthesis; chorismate biosynthesis; chorismate from D-erythrose 4-phosphate and phosphoenolpyruvate: step 7/7. Catalyzes the anti-1,4-elimination of the C-3 phosphate and the C-6 proR hydrogen from 5-enolpyruvylshikimate-3-phosphate (EPSP) to yield chorismate, which is the branch point compound that serves as the starting substrate for the three terminal pathways of aromatic amino acid biosynthesis. This reaction introduces a second double bond into the aromatic ring system. The chain is Chorismate synthase from Gloeothece citriformis (strain PCC 7424) (Cyanothece sp. (strain PCC 7424)).